A 292-amino-acid polypeptide reads, in one-letter code: Ribosomal protein L11 methyltransferase (292 aa).

S-adenosyl-L-methionine is bound by residues Thr145, Gly166, Asp188, and Asn229.

This sequence belongs to the methyltransferase superfamily. PrmA family.

The protein resides in the cytoplasm. The enzyme catalyses L-lysyl-[protein] + 3 S-adenosyl-L-methionine = N(6),N(6),N(6)-trimethyl-L-lysyl-[protein] + 3 S-adenosyl-L-homocysteine + 3 H(+). Functionally, methylates ribosomal protein L11. The polypeptide is Ribosomal protein L11 methyltransferase (Alteromonas mediterranea (strain DSM 17117 / CIP 110805 / LMG 28347 / Deep ecotype)).